Reading from the N-terminus, the 397-residue chain is ATP phosphoribosyltransferase regulatory subunit (397 aa).

It belongs to the class-II aminoacyl-tRNA synthetase family. HisZ subfamily. In terms of assembly, heteromultimer composed of HisG and HisZ subunits.

Its subcellular location is the cytoplasm. The protein operates within amino-acid biosynthesis; L-histidine biosynthesis; L-histidine from 5-phospho-alpha-D-ribose 1-diphosphate: step 1/9. Functionally, required for the first step of histidine biosynthesis. May allow the feedback regulation of ATP phosphoribosyltransferase activity by histidine. In Nitrosococcus oceani (strain ATCC 19707 / BCRC 17464 / JCM 30415 / NCIMB 11848 / C-107), this protein is ATP phosphoribosyltransferase regulatory subunit.